A 1789-amino-acid chain; its full sequence is Protein TIC 214 (1789 aa).

6 helical membrane passes run I19 to G39, F68 to L88, P91 to H111, V133 to L153, V176 to I196, and I227 to I247.

The protein belongs to the TIC214 family. Part of the Tic complex.

It is found in the plastid. Its subcellular location is the chloroplast inner membrane. Involved in protein precursor import into chloroplasts. May be part of an intermediate translocation complex acting as a protein-conducting channel at the inner envelope. This Capsella bursa-pastoris (Shepherd's purse) protein is Protein TIC 214.